A 446-amino-acid chain; its full sequence is Probable arogenate/prephenate dehydrogenase (446 aa).

Positions 6 to 288 (LTISIIGGTD…SEAKRGAYYS (283 aa)) constitute a Prephenate/arogenate dehydrogenase domain.

This sequence in the N-terminal section; belongs to the prephenate/arogenate dehydrogenase family.

This Methanocaldococcus jannaschii (strain ATCC 43067 / DSM 2661 / JAL-1 / JCM 10045 / NBRC 100440) (Methanococcus jannaschii) protein is Probable arogenate/prephenate dehydrogenase.